Here is a 92-residue protein sequence, read N- to C-terminus: Small ribosomal subunit protein uS19 (92 aa).

This sequence belongs to the universal ribosomal protein uS19 family.

Protein S19 forms a complex with S13 that binds strongly to the 16S ribosomal RNA. The chain is Small ribosomal subunit protein uS19 from Brucella ovis (strain ATCC 25840 / 63/290 / NCTC 10512).